The chain runs to 477 residues: Proline--tRNA ligase (477 aa).

This sequence belongs to the class-II aminoacyl-tRNA synthetase family. ProS type 3 subfamily. Homodimer.

Its subcellular location is the cytoplasm. The catalysed reaction is tRNA(Pro) + L-proline + ATP = L-prolyl-tRNA(Pro) + AMP + diphosphate. Catalyzes the attachment of proline to tRNA(Pro) in a two-step reaction: proline is first activated by ATP to form Pro-AMP and then transferred to the acceptor end of tRNA(Pro). In Methanoculleus marisnigri (strain ATCC 35101 / DSM 1498 / JR1), this protein is Proline--tRNA ligase.